Consider the following 353-residue polypeptide: DNA-directed RNA polymerase subunit alpha (353 aa).

Residues 1 to 226 (MLISQRPTLT…ELFGLARELN (226 aa)) are alpha N-terminal domain (alpha-NTD). The alpha C-terminal domain (alpha-CTD) stretch occupies residues 241–353 (ADHIASFGLP…TEDYAETEQL (113 aa)). The disordered stretch occupies residues 326–353 (ATGTWSDTDAGSFGDAEGTEDYAETEQL). Over residues 342–353 (EGTEDYAETEQL) the composition is skewed to acidic residues.

This sequence belongs to the RNA polymerase alpha chain family. In terms of assembly, homodimer. The RNAP catalytic core consists of 2 alpha, 1 beta, 1 beta' and 1 omega subunit. When a sigma factor is associated with the core the holoenzyme is formed, which can initiate transcription.

It catalyses the reaction RNA(n) + a ribonucleoside 5'-triphosphate = RNA(n+1) + diphosphate. Functionally, DNA-dependent RNA polymerase catalyzes the transcription of DNA into RNA using the four ribonucleoside triphosphates as substrates. This Rhodococcus jostii (strain RHA1) protein is DNA-directed RNA polymerase subunit alpha.